Reading from the N-terminus, the 173-residue chain is Large ribosomal subunit protein uL10 (173 aa).

This sequence belongs to the universal ribosomal protein uL10 family. Part of the ribosomal stalk of the 50S ribosomal subunit. The N-terminus interacts with L11 and the large rRNA to form the base of the stalk. The C-terminus forms an elongated spine to which L12 dimers bind in a sequential fashion forming a multimeric L10(L12)X complex.

In terms of biological role, forms part of the ribosomal stalk, playing a central role in the interaction of the ribosome with GTP-bound translation factors. The protein is Large ribosomal subunit protein uL10 of Acidithiobacillus ferrooxidans (strain ATCC 23270 / DSM 14882 / CIP 104768 / NCIMB 8455) (Ferrobacillus ferrooxidans (strain ATCC 23270)).